The sequence spans 399 residues: Keratin, type I cytoskeletal 19 (399 aa).

The tract at residues 1 to 78 is head; it reads MTSYSYRQSS…ATSDGLLAGN (78 aa). At R7 the chain carries Omega-N-methylarginine. 2 positions are modified to phosphoserine: S14 and S22. R24 carries the post-translational modification Asymmetric dimethylarginine; alternate. R24 carries the post-translational modification Omega-N-methylarginine; alternate. R32 is modified (omega-N-methylarginine). Residues S35 and S40 each carry the phosphoserine modification. R43 and R51 each carry omega-N-methylarginine. Phosphoserine occurs at positions 57 and 71. Residues 79–114 form a coil 1A region; sequence EKLTMQNLNDRLASYLEKVRALEEANGDLEVKIRDW. The 312-residue stretch at 79–390 folds into the IF rod domain; that stretch reads EKLTMQNLND…NLLEGQDAYF (312 aa). The interval 115–132 is linker 1; sequence YQKQGPGPARDYSHYFKT. The tract at residues 133–224 is coil 1B; it reads IEDLRDQILG…KNHEEEMSVL (92 aa). Residues 225–247 form a linker 12 region; that stretch reads KGQVGGQVSVEVDSAPGIDLAKI. Positions 243 to 389 are necessary for interaction with PNN; it reads DLAKILSDMR…RNLLEGQDAY (147 aa). The tract at residues 248–386 is coil 2; that stretch reads LSDMRSQYEV…ATYRNLLEGQ (139 aa). Position 322 is a phosphothreonine (T322). The segment at 387-399 is rod-like helical tail; it reads DAYFNDLSLAKAL. A Phosphoserine modification is found at S394.

This sequence belongs to the intermediate filament family. In terms of assembly, heterotetramer of two type I and two type II keratins. Interacts with PNN and the actin-binding domain of DMD.

In terms of biological role, involved in the organization of myofibers. Together with KRT8, helps to link the contractile apparatus to dystrophin at the costameres of striated muscle. This chain is Keratin, type I cytoskeletal 19 (KRT19), found in Bos taurus (Bovine).